The sequence spans 283 residues: MMTHWPSPAKLNLFLYITGQRADGYHTLQTLFQFLDYGDTLHIEPRHDGEIHLLTPVNGVENEDNLIVRAARLLMKVASESGRLPAGSGADISIEKRLPMGGGLGGGSSNAATVLVALNHLWQCGLSIDELATLGLTLGADVPVFVRGHAAFAEGVGEILTPVNPPEKWYLVAHPGVSIPTPVIFKDPQLPRNTPKRSIDTLLKCEFSNDCEVIARKRFREVDAALSWLLEYAPSRLTGTGACVFAEFDTESCARQVLEQAPEWLNAFVAKGVNLSPLHRELL.

Residue Lys10 is part of the active site. An ATP-binding site is contributed by 99-109 (PMGGGLGGGSS). The active site involves Asp141.

This sequence belongs to the GHMP kinase family. IspE subfamily. As to quaternary structure, homodimer.

It catalyses the reaction 4-CDP-2-C-methyl-D-erythritol + ATP = 4-CDP-2-C-methyl-D-erythritol 2-phosphate + ADP + H(+). The protein operates within isoprenoid biosynthesis; isopentenyl diphosphate biosynthesis via DXP pathway; isopentenyl diphosphate from 1-deoxy-D-xylulose 5-phosphate: step 3/6. Functionally, catalyzes the phosphorylation of the position 2 hydroxy group of 4-diphosphocytidyl-2C-methyl-D-erythritol. In Salmonella typhimurium (strain LT2 / SGSC1412 / ATCC 700720), this protein is 4-diphosphocytidyl-2-C-methyl-D-erythritol kinase (ispE).